A 243-amino-acid chain; its full sequence is MSSIYLGVNIDHVATLRNARGTQYPDPVHAAEIAERAGADGITIHLREDRRHITDRDVRILRETLQTRMNLEMAVTDEMVEIALQTQPEYVCLVPEKREELTTEGGLDVLGQLERVKAATEKLTAAGIKVSLFIDADREQIDAAKACGAPFIELHTGHYSDAKSDVDQQNELKKIAAAAAYAHDLGITVNAGHGLTYHNVAAIAAIPEIYELNIGHAIIGRAVFDGLAKAVADMKAIMVAARR.

N9 provides a ligand contact to 3-amino-2-oxopropyl phosphate. 11–12 (DH) is a 1-deoxy-D-xylulose 5-phosphate binding site. 3-amino-2-oxopropyl phosphate is bound at residue R20. Catalysis depends on H45, which acts as the Proton acceptor. 1-deoxy-D-xylulose 5-phosphate-binding residues include R47 and H52. E72 serves as the catalytic Proton acceptor. T102 serves as a coordination point for 1-deoxy-D-xylulose 5-phosphate. H193 functions as the Proton donor in the catalytic mechanism. Residues G194 and 215–216 (GH) each bind 3-amino-2-oxopropyl phosphate.

Belongs to the PNP synthase family. In terms of assembly, homooctamer; tetramer of dimers.

It localises to the cytoplasm. It carries out the reaction 3-amino-2-oxopropyl phosphate + 1-deoxy-D-xylulose 5-phosphate = pyridoxine 5'-phosphate + phosphate + 2 H2O + H(+). It participates in cofactor biosynthesis; pyridoxine 5'-phosphate biosynthesis; pyridoxine 5'-phosphate from D-erythrose 4-phosphate: step 5/5. Functionally, catalyzes the complicated ring closure reaction between the two acyclic compounds 1-deoxy-D-xylulose-5-phosphate (DXP) and 3-amino-2-oxopropyl phosphate (1-amino-acetone-3-phosphate or AAP) to form pyridoxine 5'-phosphate (PNP) and inorganic phosphate. This chain is Pyridoxine 5'-phosphate synthase, found in Vibrio cholerae serotype O1 (strain ATCC 39315 / El Tor Inaba N16961).